The primary structure comprises 156 residues: Transcriptional regulator MraZ (156 aa).

SpoVT-AbrB domains lie at 7–64 and 93–136; these read KERH…EPSV and LEMV…EPAR.

Belongs to the MraZ family. As to quaternary structure, forms oligomers.

It localises to the cytoplasm. The protein localises to the nucleoid. The protein is Transcriptional regulator MraZ of Chlorobium phaeovibrioides (strain DSM 265 / 1930) (Prosthecochloris vibrioformis (strain DSM 265)).